The sequence spans 527 residues: GMP synthase [glutamine-hydrolyzing] (527 aa).

A Glutamine amidotransferase type-1 domain is found at 4 to 202 (KILILDFGSQ…VLKICGAQPD (199 aa)). Residue cysteine 81 is the Nucleophile of the active site. Active-site residues include histidine 176 and glutamate 178. The 193-residue stretch at 203-395 (WEMGHYIDEA…LGLPPAMVYR (193 aa)) folds into the GMPS ATP-PPase domain. An ATP-binding site is contributed by 230–236 (SGGVDSS).

As to quaternary structure, homodimer.

It catalyses the reaction XMP + L-glutamine + ATP + H2O = GMP + L-glutamate + AMP + diphosphate + 2 H(+). It functions in the pathway purine metabolism; GMP biosynthesis; GMP from XMP (L-Gln route): step 1/1. In terms of biological role, catalyzes the synthesis of GMP from XMP. The chain is GMP synthase [glutamine-hydrolyzing] from Paraburkholderia xenovorans (strain LB400).